The sequence spans 266 residues: PTS system mannose-specific EIIC component (266 aa).

Position 1 is an N-formylmethionine (M1). Residues 1 to 4 (MEIT) are Periplasmic-facing. Residues 1 to 237 (MEITTLQIVL…GVIGTVMAVL (237 aa)) form the PTS EIIC type-4 domain. An intramembrane segment occupies 5-43 (TLQIVLVFIVACIAGMGSILDEFQFHRPLIACTLVGIVL). Residues 44-46 (GDM) are Periplasmic-facing. Residues 47–86 (KTGIIIGGTLEMIALGWMNIGAAVAPDAALASIISTILVI) lie within the membrane without spanning it. At 87-90 (AGHQ) the chain is on the periplasmic side. A membrane pass occupies residues 91-124 (SIGAGIALAIPLAAAGQVLTIIVRTITVAFQHAA). Topologically, residues 125-132 (DKAADNGN) are cytoplasmic. The hydrophobic stretch at 133-160 (LTAISWIHVSSLFLQAMRVAIPAVIVAL) threads the membrane. Residues 161-176 (SVGTSEVQNMLNAIPE) are Periplasmic-facing. Positions 177–200 (VVTNGLNIAGGMIVVVGYAMVINM) form a transmembrane segment. Residues 201–207 (MRAGYLM) lie on the Cytoplasmic side of the membrane. A membrane pass occupies residues 208 to 218 (PFFYLGFVTAA). The Periplasmic segment spans residues 219–224 (FTNFNL). The hydrophobic stretch at 225–242 (VALGVIGTVMAVLYIQLS) threads the membrane. The Cytoplasmic segment spans residues 243 to 266 (PKYNRVAGAPAQAAGNNDLDNELD).

As to quaternary structure, homotrimer of protomers that are composed of two subunits, IIC and IID.

The protein resides in the cell inner membrane. The phosphoenolpyruvate-dependent sugar phosphotransferase system (sugar PTS), a major carbohydrate active transport system, catalyzes the phosphorylation of incoming sugar substrates concomitantly with their translocation across the cell membrane. The enzyme II ManXYZ PTS system is involved in mannose transport. The protein is PTS system mannose-specific EIIC component (manY) of Escherichia coli O157:H7.